The chain runs to 300 residues: UPF0282 protein TON_1363 (300 aa).

It belongs to the UPF0282 family.

This chain is UPF0282 protein TON_1363, found in Thermococcus onnurineus (strain NA1).